A 922-amino-acid chain; its full sequence is Chaperone protein ClpC, chloroplastic (922 aa).

A chloroplast-targeting transit peptide spans 1-72 (MARVLAQSLS…RPGLDFHSKV (72 aa)). The region spanning 92–234 (FERFTEKAIK…RTQVIRMVGE (143 aa)) is the Clp R domain. Repeat stretches follow at residues 95 to 160 (FTEK…IGRG) and 170 to 234 (FTPR…MVGE). The tract at residues 255 to 502 (LEEYGTNLTK…RVRLQHAQLP (248 aa)) is i. ATP is bound at residue 300 to 307 (GEPGVGKT). Positions 509-544 (DKEVRKIVKEKEEYVRNQDFEKAGELRDKEMDLKAQ) constitute a UVR domain. An II region spans residues 569-760 (VTEVDIQHIV…LLIMTSNVGS (192 aa)). Position 643–650 (643–650 (GPTGVGKS)) interacts with ATP.

The protein belongs to the ClpA/ClpB family. ClpC subfamily.

It localises to the plastid. It is found in the chloroplast. Functionally, molecular chaperone that may interact with a ClpP-like protease involved in degradation of denatured proteins in the chloroplast. The chain is Chaperone protein ClpC, chloroplastic from Pisum sativum (Garden pea).